The following is a 642-amino-acid chain: Mini-chromosome maintenance complex-binding protein (642 aa).

Polar residues predominate over residues 151–161; it reads ARVSPSTSYTP. Residues 151–196 are disordered; that stretch reads ARVSPSTSYTPSRHKRSYEDDEDMDLQPSKQKEQHPGSRQAGGLGG. At Ser154 the chain carries Phosphoserine. Thr160 carries the post-translational modification Phosphothreonine. Phosphoserine occurs at positions 167 and 298.

This sequence belongs to the MCMBP family. As to quaternary structure, interacts with the MCM complex: associates with the MCM3-7 complex which lacks MCM2, while it does not interact with the MCM complex when MCM2 is present (MCM2-7 complex). Interacts with the RPA complex, when composed of all RPA1, RPA2 and RPA3 components, but not with RPA1 or RPA2 alone.

Its subcellular location is the nucleus. Its function is as follows. Associated component of the MCM complex that acts as a regulator of DNA replication. Binds to the MCM complex during late S phase and promotes the disassembly of the MCM complex from chromatin, thereby acting as a key regulator of pre-replication complex (pre-RC) unloading from replicated DNA. Can dissociate the MCM complex without addition of ATP; probably acts by destabilizing interactions of each individual subunits of the MCM complex. Required for sister chromatid cohesion. The polypeptide is Mini-chromosome maintenance complex-binding protein (Mcmbp) (Mus musculus (Mouse)).